Consider the following 432-residue polypeptide: Adenylosuccinate synthetase (432 aa).

GTP-binding positions include 12 to 18 (GDEGKGK) and 40 to 42 (GHT). Aspartate 13 (proton acceptor) is an active-site residue. Mg(2+) contacts are provided by aspartate 13 and glycine 40. Residues 13–16 (DEGK), 38–41 (NAGH), threonine 129, arginine 143, glutamine 224, threonine 239, and arginine 303 contribute to the IMP site. Residue histidine 41 is the Proton donor of the active site. A substrate-binding site is contributed by 299 to 305 (VTTGRRR). Residues arginine 305, 331–333 (KLD), and 413–415 (GVG) each bind GTP.

Belongs to the adenylosuccinate synthetase family. In terms of assembly, homodimer. Mg(2+) serves as cofactor.

It localises to the cytoplasm. It carries out the reaction IMP + L-aspartate + GTP = N(6)-(1,2-dicarboxyethyl)-AMP + GDP + phosphate + 2 H(+). It participates in purine metabolism; AMP biosynthesis via de novo pathway; AMP from IMP: step 1/2. In terms of biological role, plays an important role in the de novo pathway of purine nucleotide biosynthesis. Catalyzes the first committed step in the biosynthesis of AMP from IMP. The protein is Adenylosuccinate synthetase of Mycobacterium leprae (strain TN).